Here is a 323-residue protein sequence, read N- to C-terminus: Protein translocase subunit SecF (323 aa).

Helical transmembrane passes span 19–39 (GVIV…FKGF), 138–158 (ILSL…RYEW), 162–182 (LASV…VIVF), 189–209 (EVIA…IIIF), 244–264 (LTVF…IIGF), and 269–289 (LIGT…VALL).

The protein belongs to the SecD/SecF family. SecF subfamily. Forms a complex with SecD. Part of the essential Sec protein translocation apparatus which comprises SecA, SecYEG and auxiliary proteins SecDF-YajC and YidC.

It is found in the cell inner membrane. In terms of biological role, part of the Sec protein translocase complex. Interacts with the SecYEG preprotein conducting channel. SecDF uses the proton motive force (PMF) to complete protein translocation after the ATP-dependent function of SecA. This is Protein translocase subunit SecF from Helicobacter pylori (strain J99 / ATCC 700824) (Campylobacter pylori J99).